The following is a 286-amino-acid chain: ATP synthase gamma chain (286 aa).

It belongs to the ATPase gamma chain family. As to quaternary structure, F-type ATPases have 2 components, CF(1) - the catalytic core - and CF(0) - the membrane proton channel. CF(1) has five subunits: alpha(3), beta(3), gamma(1), delta(1), epsilon(1). CF(0) has three main subunits: a, b and c.

Its subcellular location is the cell inner membrane. Functionally, produces ATP from ADP in the presence of a proton gradient across the membrane. The gamma chain is believed to be important in regulating ATPase activity and the flow of protons through the CF(0) complex. In Pseudomonas aeruginosa (strain UCBPP-PA14), this protein is ATP synthase gamma chain.